The primary structure comprises 537 residues: Probable protein kinase UbiB (537 aa).

The helical transmembrane segment at 30–47 (LLPWWLRALGYLLPWRWL) threads the bilayer. One can recognise a Protein kinase domain in the interval 126–490 (RFDSEPLASA…KRERHDHHLL (365 aa)). Residues 132 to 140 (LASASVAQV) and Lys-154 each bind ATP. Asp-289 (proton acceptor) is an active-site residue. The next 2 helical transmembrane spans lie at 489-507 (LLRL…LALQ) and 513-530 (ANAW…YLLV).

The protein belongs to the ABC1 family. UbiB subfamily.

It is found in the cell inner membrane. It functions in the pathway cofactor biosynthesis; ubiquinone biosynthesis [regulation]. Its function is as follows. Is probably a protein kinase regulator of UbiI activity which is involved in aerobic coenzyme Q (ubiquinone) biosynthesis. The sequence is that of Probable protein kinase UbiB from Azotobacter vinelandii (strain DJ / ATCC BAA-1303).